We begin with the raw amino-acid sequence, 159 residues long: Ribosomal RNA large subunit methyltransferase H (159 aa).

Residues Leu76 and Gly108 each contribute to the S-adenosyl-L-methionine site.

It belongs to the RNA methyltransferase RlmH family. In terms of assembly, homodimer.

It localises to the cytoplasm. The catalysed reaction is pseudouridine(1915) in 23S rRNA + S-adenosyl-L-methionine = N(3)-methylpseudouridine(1915) in 23S rRNA + S-adenosyl-L-homocysteine + H(+). Specifically methylates the pseudouridine at position 1915 (m3Psi1915) in 23S rRNA. The polypeptide is Ribosomal RNA large subunit methyltransferase H (Pediococcus pentosaceus (strain ATCC 25745 / CCUG 21536 / LMG 10740 / 183-1w)).